The sequence spans 519 residues: Importin subunit alpha-9 (519 aa).

The segment at Met1–Gln29 is disordered. ARM repeat units follow at residues Phe116 to Ala156, Lys158 to Gly197, Glu200 to Lys239, Lys244 to Ala283, Asp286 to Ala326, Ile335 to Ala374, Ile377 to Val416, and Gln429 to Arg468.

It belongs to the importin alpha family. As to quaternary structure, forms a complex with importin subunit beta-1.

It is found in the nucleus envelope. In terms of biological role, binds to conventional NLS motifs and mediates nuclear protein import across the nuclear envelope. Acts as a cellular receptor for the nuclear import of the virD2 protein of Agrobacterium, but is not essential for Agrobacterium-mediated root transformation. This chain is Importin subunit alpha-9, found in Arabidopsis thaliana (Mouse-ear cress).